The chain runs to 198 residues: Recombination protein RecR (198 aa).

A C4-type zinc finger spans residues 57–72 (CEKCNTFTEAQICEVC). Residues 80–175 (TLLCVVETPA…AVTRLARGVP (96 aa)) enclose the Toprim domain.

Belongs to the RecR family.

Functionally, may play a role in DNA repair. It seems to be involved in an RecBC-independent recombinational process of DNA repair. It may act with RecF and RecO. This chain is Recombination protein RecR, found in Burkholderia ambifaria (strain MC40-6).